Consider the following 149-residue polypeptide: uncharacterized protein (149 aa).

Disordered stretches follow at residues 24–74 (TSQG…NDLE) and 129–149 (AIQD…PRAP). Residues 28–42 (EDVKPEPKPEVDEKV) are compositionally biased toward basic and acidic residues. The stretch at 102-131 (SELESLKEKVSSATSMEELREIMEEFRAIQ) forms a coiled coil.

This is an uncharacterized protein from Archaeoglobus fulgidus (strain ATCC 49558 / DSM 4304 / JCM 9628 / NBRC 100126 / VC-16).